The primary structure comprises 112 residues: MNTKGKVYEDKAVSFFLNRDYRIIARNFSYRHGEIDIIALKNKILHLIEVKGGKETFGDPAFRVNSRKLKKIMKVGNYFIATHPKLEFDEIQIDVISVTNDGVINYYPAQRL.

It belongs to the UPF0102 family.

In Petrotoga mobilis (strain DSM 10674 / SJ95), this protein is UPF0102 protein Pmob_0702.